The primary structure comprises 291 residues: ATP synthase gamma chain (291 aa).

The protein belongs to the ATPase gamma chain family. F-type ATPases have 2 components, CF(1) - the catalytic core - and CF(0) - the membrane proton channel. CF(1) has five subunits: alpha(3), beta(3), gamma(1), delta(1), epsilon(1). CF(0) has three main subunits: a, b and c.

Its subcellular location is the cell inner membrane. In terms of biological role, produces ATP from ADP in the presence of a proton gradient across the membrane. The gamma chain is believed to be important in regulating ATPase activity and the flow of protons through the CF(0) complex. The protein is ATP synthase gamma chain of Rhodopseudomonas palustris (strain BisB5).